Here is a 796-residue protein sequence, read N- to C-terminus: Armadillo repeat-containing protein wrm-1 (796 aa).

Positions 17-59 are disordered; it reads NFNPMTPSTSRVSTPVRPSSTMSARQYSGSPFKAQPQNMEPSN. The stretch at 462 to 504 is one ARM repeat; the sequence is ESIHCIVQLIGCSDVTIVELATGTLRNIGLHNKMNKAFMVQDG.

As to quaternary structure, interacts (independently of ARM repeat) with nhr-25. Component of the beta-catenin-lit-1 complex (also called the lit-1/wrm-1 complex or the wrm-1/lit-1 kinase complex) at least composed of lit-1 and wrm-1. Interacts (via N-terminus) with lit-1; the interaction is direct and activates lit-1 kinase activity which leads to the phosphorylation of pop-1. This promotes pop-1 interaction with par-5 and translocation of pop-1 from the nucleus to the cytoplasm.

The protein resides in the cytoplasm. It localises to the cell cortex. Its subcellular location is the nucleus. In terms of biological role, antagonistic role in the Wnt signaling pathway that operates in embryogenesis. When located at the cortex it has been shown to inhibit Wnt signaling during asymmetric cell division but when relocated to the nucleus it shows positive regulation. Has a role in blastomere signaling during endoderm specification. Component of the beta-catenin-lit-1 complex which promotes phosphorylation, down-regulation and subcellular relocation of pop-1. Within the complex, activates lit-1-dependent kinase activity. Can substitute for bar-1 indicating functional redundancy. Appears to have a role in centrosome positioning and can activation transcription in yeast. Involved in the development of distal tip cells (DTC) by regulating the asymmetric distribution of cye-1 and cki-1 between the daughters of Z1.a and Z4.p cells. The polypeptide is Armadillo repeat-containing protein wrm-1 (Caenorhabditis elegans).